A 66-amino-acid chain; its full sequence is UPF0337 protein bsl1473 (66 aa).

It belongs to the UPF0337 (CsbD) family.

This Bradyrhizobium diazoefficiens (strain JCM 10833 / BCRC 13528 / IAM 13628 / NBRC 14792 / USDA 110) protein is UPF0337 protein bsl1473.